The chain runs to 523 residues: Heparanase (523 aa).

Residues 1–18 (MLVLLLLVLLLAVPPRRT) form the signal peptide. Residues 42–44 (DAS), T77, and 137–141 (KKHKN) each bind heparan sulfate group. 2 N-linked (GlcNAc...) asparagine glycosylation sites follow: N141 and N196. The Proton donor role is filled by E204. Heparan sulfate group is bound by residues 250–260 (QPRKHTQHLLR), H276, and R283. The tract at residues 268–397 (KAIDSVTWHH…LLYKRLVGTR (130 aa)) is required for heterodimerization with the heparanase 8 kDa subunit. Residue E323 is the Nucleophile of the active site. Heparan sulfate group contacts are provided by residues 328–330 (YGG) and 369–371 (GSY). Residues C417 and C522 are joined by a disulfide bond. 2 N-linked (GlcNAc...) asparagine glycosylation sites follow: N436 and N439. A required for transferring proheparanase to the Golgi apparatus, secretion and subsequent enzyme activity and for enhancement of PKB/AKT1 phosphorylation region spans residues 507 to 523 (FSYGFYVIRNAKAIACI).

Belongs to the glycosyl hydrolase 79 family. As to quaternary structure, heterodimer; the active enzyme is a heterodimer of the 60 kDa and 45 kDa proteolytic products. Post-translationally, N-glycosylated. Proteolytically cleaved to produce a 60 kDa and a 45 kDa product.

The protein resides in the secreted. The catalysed reaction is endohydrolysis of (1-&gt;4)-beta-D-glycosidic bonds of heparan sulfate chains in heparan sulfate proteoglycan.. Functionally, endoglycosidase that cleaves heparan sulfate proteoglycans (HSPGs) into heparan sulfate side chains and core proteoglycans. Participates in extracellular matrix (ECM) degradation and remodeling. Selectively cleaves the linkage between a glucuronic acid unit and an N-sulfo glucosamine unit carrying either a 3-O-sulfo or a 6-O-sulfo group. Can also cleave the linkage between a glucuronic acid unit and an N-sulfo glucosamine unit carrying a 2-O-sulfo group, but not linkages between a glucuronic acid unit and a 2-O-sulfated iduronic acid moiety. Increases cell adhesion to the extracellular matrix (ECM), independent of its enzymatic activity. In Gallus gallus (Chicken), this protein is Heparanase (HPSE).